The following is a 442-amino-acid chain: Hydroxycinnamoyltransferase 2 (442 aa).

Active-site proton acceptor residues include His-159 and Asp-389.

It belongs to the plant acyltransferase family. In terms of tissue distribution, expressed in roots and leaves. Expressed at low levels in stems and seeds.

Functionally, hydroxycinnamoyl transferase that catalyzes the transfer of an acyl from p-coumaryol-CoA to various acyl acceptors. Can use feruloyl-CoA and caffeoyl-CoA as acyl donors. The chain is Hydroxycinnamoyltransferase 2 from Oryza sativa subsp. japonica (Rice).